Reading from the N-terminus, the 388-residue chain is P2X receptor E (388 aa).

The Cytoplasmic segment spans residues 1 to 28 (MNFRNIDWDSLFSYSTIKIVRIRDKRLG). The chain crosses the membrane as a helical span at residues 29–49 (ILHFAFLIGIILYIIVGTIFL). The Lumenal segment spans residues 50–312 (QKKYLVLESP…QLGQFDFQTM (263 aa)). The interval 291-304 (RHGVRIIFIQTGQL) is pore-forming motif. The helical transmembrane segment at 313-333 (LLTFVSGIGLVTAASLIVDII) threads the bilayer. Residues 334–388 (ATRIMPQRSRYQELKFQDSSINNTQKTPTNDHTPLLKDNEDTINENSYQNNSYEK) are Cytoplasmic-facing. Residues 349–388 (FQDSSINNTQKTPTNDHTPLLKDNEDTINENSYQNNSYEK) form a disordered region. 2 stretches are compositionally biased toward polar residues: residues 350–365 (QDSSINNTQKTPTNDH) and 377–388 (NENSYQNNSYEK).

The protein belongs to the P2X receptor family.

Its subcellular location is the contractile vacuole membrane. In terms of biological role, P2X receptors are ATP-gated ion channels that play a role in intracellular calcium signaling. Not required for the purinergic response to extracellular nucleotides. Not essential for osmoregulation. Inward currents evoked by intracellular ATP. ATP analog beta, gamma-imido-ATP is a weak partial agonist of p2xE. Exclusively selective for ATP over other nucleotides. Insensitive to copper and P2 receptor antagonists PPADS and suramin but strongly inhibited by sodium ions. More permeable to ammonium than either sodium or potassium ions and less permeable to choline. Permeable to calcium ions, but not chloride. The protein is P2X receptor E (p2xE) of Dictyostelium discoideum (Social amoeba).